A 685-amino-acid chain; its full sequence is MSRKREMPDGGAKSVLSDLRFGRFVGRIRRSRHPALLLLALFVAACWLTWVNFSVALPRSQWQQAIWSPDIDIIEQMIFHYSQLPRLAISLLVGAGLGLVGVLFQQVLRNPLAEPTTLGVATGAQLGITVTTLWAIPGALTTQFAALTGACIVGALVFGVAWGKRLSPVTLILAGLVVSLYCGAINQLLVIFHHDQLQSMFLWSTGTLTQTDWSGVQRLWPQLLGGVMLTLLLLRPMTLMGLDDGVARNLGLALSLARLAALSLAIVLSALLVNAVGIIGFIGLFAPLLAKMLGARRLLARLMLAPLIGALILWLSDQIILWLTRVWMEVSTGSVTALIGAPLLLWLLPRLKSMSAPDMNASDRVAAERRHVLAFAVAGGALLLLATWVALSFGRDAHGWTWASGTLLEELMPWRWPRILAALMAGVMLAVAGCIIQRLTGNPMASPEVLGISSGAAFGVVLMLFLVPGNAFGWLLPAGSLGAAATLLIIMIAAGRGGFSPQRMLLAGMALSTAFTMLLMMLQASGDPRMAEVLTWLSGSTYNATGGQVTRTAIVMVILLAIVPLCRRWLTILPLGGDAARAVGMALTPSRIALLALAACLTATATMTIGPLSFVGLMAPHIARMLGFRRTMPHMVISALAGGVLLVFADWCGRMALFPYQIPAGLLSSFIGAPYFIYLLRKQSR.

The next 18 membrane-spanning stretches (helical) occupy residues 35–55 (ALLLLALFVAACWLTWVNFSV), 87–107 (LAISLLVGAGLGLVGVLFQQV), 120–140 (VATGAQLGITVTTLWAIPGAL), 143–163 (QFAALTGACIVGALVFGVAWG), 172–192 (ILAGLVVSLYCGAINQLLVIF), 222–242 (QLLGGVMLTLLLLRPMTLMGL), 265–285 (AIVLSALLVNAVGIIGFIGLF), 302–322 (LMLAPLIGALILWLSDQIILW), 328–348 (MEVSTGSVTALIGAPLLLWLL), 373–393 (LAFAVAGGALLLLATWVALSF), 416–436 (WPRILAALMAGVMLAVAGCII), 456–476 (AAFGVVLMLFLVPGNAFGWLL), 479–499 (GSLGAAATLLIIMIAAGRGGF), 504–524 (MLLAGMALSTAFTMLLMMLQA), 553–573 (AIVMVILLAIVPLCRRWLTIL), 592–612 (IALLALAACLTATATMTIGPL), 632–652 (MPHMVISALAGGVLLVFADWC), and 660–680 (YQIPAGLLSSFIGAPYFIYLL).

The protein belongs to the binding-protein-dependent transport system permease family. FecCD subfamily. The complex is composed of two ATP-binding proteins (FhuC), a transmembrane protein (FhuB) and a solute-binding protein (FhuD).

The protein localises to the cell inner membrane. In terms of biological role, part of the ABC transporter complex FhuCDB involved in iron(3+)-hydroxamate import. Responsible for the translocation of the substrate across the membrane. Involved in ferrioxamine-mediated iron(III) utilization. The sequence is that of Iron(3+)-hydroxamate import system permease protein FhuB (fhuB) from Salmonella typhimurium (strain LT2 / SGSC1412 / ATCC 700720).